Reading from the N-terminus, the 487-residue chain is Cysteine--tRNA ligase (487 aa).

Cys29 provides a ligand contact to Zn(2+). A 'HIGH' region motif is present at residues 31–41; the sequence is VTVYDYNHVGH. The Zn(2+) site is built by Cys209, His234, and Glu238. A 'KMSKS' region motif is present at residues 266 to 270; that stretch reads KMSKS. Lys269 provides a ligand contact to ATP.

This sequence belongs to the class-I aminoacyl-tRNA synthetase family. In terms of assembly, monomer. The cofactor is Zn(2+).

It is found in the cytoplasm. It carries out the reaction tRNA(Cys) + L-cysteine + ATP = L-cysteinyl-tRNA(Cys) + AMP + diphosphate. This chain is Cysteine--tRNA ligase, found in Sulfurihydrogenibium sp. (strain YO3AOP1).